Here is a 610-residue protein sequence, read N- to C-terminus: ESX-5 secretion system protein EccA5 (610 aa).

357–364 (GPPGTGKT) contacts ATP.

The protein belongs to the CbxX/CfxQ family. Part of the ESX-5 / type VII secretion system (T7SS), which is composed of cytosolic and membrane components.

It localises to the cytoplasm. Part of an ESX-5 / type VII specialized secretion system (T7SS), which exports several proteins. EccA5 exhibits ATPase activity and may provide energy for the export of ESX-5 substrates. The protein is ESX-5 secretion system protein EccA5 of Mycobacterium bovis (strain ATCC BAA-935 / AF2122/97).